A 156-amino-acid polypeptide reads, in one-letter code: MTTLNAKPDFSLFLQALSWEIDDQAGIEVRNDLLREVGRGMAGRFQPPLCNTIHQLQIELNALLAMINWGYVKLDLLAEEQAMRIVHEDLPQVGSAGEPAGTWLAPVLEGLYGRWITSQPGAFGDYVVTRDIDAEDLNSVPAQTIILYMRTRSAAT.

It participates in glycan metabolism; bacterial cellulose biosynthesis. Its function is as follows. May have a major role in the perfection of crystallization, involved either in the pore structure itself or in the organization of the pores within the linear array of terminal synthesizing complexes (TCs). The sequence is that of Cellulose synthase operon protein D from Komagataeibacter xylinus (Gluconacetobacter xylinus).